The sequence spans 317 residues: Olfactory receptor 1082 (317 aa).

The Extracellular segment spans residues 1 to 26 (MESGNSTRRFSSFFLLGFTENPQLHF). Asparagine 5 carries an N-linked (GlcNAc...) asparagine glycan. A helical membrane pass occupies residues 27–51 (LIFALFLSMYLVTVLGNLLIIMAII). Over 52 to 58 (TQSHLHT) the chain is Cytoplasmic. The helical transmembrane segment at 59 to 80 (PMYFFLANLSFVDICFTSTTIP) threads the bilayer. Over 81 to 101 (KMLVNIYTQSKSITYEDCISQ) the chain is Extracellular. Cysteine 98 and cysteine 190 are oxidised to a cystine. A helical membrane pass occupies residues 102–121 (MCVFLVFAELGNFLLAVMAY). Over 122 to 140 (DRYVAXCHPLCYTVIVNHR) the chain is Cytoplasmic. A helical membrane pass occupies residues 141–159 (LCILLLLLSWVISIFHAFI). Residues 160–197 (QSLIVLQLTFCGDVKIPHFFCELNQLSQLTCSDNFPSH) are Extracellular-facing. A helical membrane pass occupies residues 198-220 (LIMNLVPVMLAAISFSGILYSYF). Residues 221 to 237 (KIVSSIHSISTVQGKYK) are Cytoplasmic-facing. A helical transmembrane segment spans residues 238-261 (AFSTCASHLSIVSLFYSTGLGVYV). Topologically, residues 262–273 (SSAVVQSSHSAA) are extracellular. Residues 274-293 (SASVMYTVVTPMLNPFIYSL) form a helical membrane-spanning segment. Residues 294-317 (RNKDVKRALERLLEGNCKVHHWTG) lie on the Cytoplasmic side of the membrane.

This sequence belongs to the G-protein coupled receptor 1 family. As to expression, olfactory epithelium.

Its subcellular location is the cell membrane. Functionally, odorant receptor. The chain is Olfactory receptor 1082 (Olr1082) from Rattus norvegicus (Rat).